The chain runs to 353 residues: Protein MGF 360-13L (353 aa).

Belongs to the asfivirus MGF 360 family.

In terms of biological role, plays a role in virus cell tropism, and may be required for efficient virus replication in macrophages. The sequence is that of Protein MGF 360-13L from African swine fever virus (isolate Pig/Kenya/KEN-50/1950) (ASFV).